Reading from the N-terminus, the 309-residue chain is Foldase protein PrsA (309 aa).

A signal peptide spans 1–22 (MKTRSKLAAGFLTLMSVATLAA). Cys23 carries N-palmitoyl cysteine lipidation. Cys23 is lipidated: S-diacylglycerol cysteine. Positions 146–241 (TPETSVQVIK…TSYYIIKVTD (96 aa)) constitute a PpiC domain.

This sequence belongs to the PrsA family.

The protein localises to the cell membrane. It carries out the reaction [protein]-peptidylproline (omega=180) = [protein]-peptidylproline (omega=0). Its function is as follows. Plays a major role in protein secretion by helping the post-translocational extracellular folding of several secreted proteins. In Streptococcus agalactiae serotype III (strain NEM316), this protein is Foldase protein PrsA.